A 519-amino-acid chain; its full sequence is Iroquois-class homeodomain protein IRX-4 (519 aa).

Positions 143–204 (GTRRKNATRE…NARRRLKKEN (62 aa)) form a DNA-binding region, homeobox; TALE-type. The tract at residues 204–298 (NKMTWPPRNK…VPAAPDGPVK (95 aa)) is disordered. Basic and acidic residues predominate over residues 213-222 (KCADEKRPYA). Composition is skewed to acidic residues over residues 223-235 (EGEEEEGGEEEAR) and 257-267 (LSDLDDFDPLE).

Belongs to the TALE/IRO homeobox family. As to quaternary structure, interacts with the vitamin D receptor VDR but doesn't affect its transactivation activity. Predominantly expressed in cardiac ventricles.

The protein resides in the nucleus. In terms of biological role, likely to be an important mediator of ventricular differentiation during cardiac development. In Homo sapiens (Human), this protein is Iroquois-class homeodomain protein IRX-4 (IRX4).